A 164-amino-acid chain; its full sequence is Phosphopantetheine adenylyltransferase (164 aa).

Serine 9 is a binding site for substrate. ATP is bound by residues 9–10 and histidine 17; that span reads SF. Lysine 41, valine 78, and arginine 92 together coordinate substrate. ATP is bound by residues 93-95, glutamate 103, and 128-134; these read GLR and SRPITAT.

This sequence belongs to the bacterial CoaD family. In terms of assembly, homohexamer. It depends on Mg(2+) as a cofactor.

The protein resides in the cytoplasm. It carries out the reaction (R)-4'-phosphopantetheine + ATP + H(+) = 3'-dephospho-CoA + diphosphate. The protein operates within cofactor biosynthesis; coenzyme A biosynthesis; CoA from (R)-pantothenate: step 4/5. Its function is as follows. Reversibly transfers an adenylyl group from ATP to 4'-phosphopantetheine, yielding dephospho-CoA (dPCoA) and pyrophosphate. In Agrobacterium fabrum (strain C58 / ATCC 33970) (Agrobacterium tumefaciens (strain C58)), this protein is Phosphopantetheine adenylyltransferase.